A 734-amino-acid polypeptide reads, in one-letter code: MSGFDDPGIFYSDSFGGDAQADEGQARKSQLQRRFKEFLRQYRVGTDRTGFTFKYRDELKRHYNLGEYWIEVEMEDLASFDEDLADYLYKQPAEHLQLLEEAAKEVADEVTRPRPSGEEVLQDIQVMLKSDASPSSIRSLKSDMMSHLVKIPGIIIAASAVRAKATRISIQCRSCRNTLTNIAMRPGLEGYALPRKCNTDQAGRPKCPLDPYFIMPDKCKCVDFQTLKLQELPDAVPHGEMPRHMQLYCDRYLCDKVVPGNRVTIMGIYSIKKFGLTTSRGRDRVGVGIRSSYIRVLGIQVDTDGSGRSFAGAVSPQEEEEFRRLAALPNVYEVISKSIAPSIFGGTDMKKAIACLLFGGSRKRLPDGLTRRGDINLLMLGDPGTAKSQLLKFVEKCSPIGVYTSGKGSSAAGLTASVMRDPSSRNFIMEGGAMVLADGGVVCIDEFDKMREDDRVAIHEAMEQQTISIAKAGITTTLNSRCSVLAAANSVFGRWDETKGEDNIDFMPTILSRFDMIFIVKDEHNEERDVMLAKHVITLHVSALTQTQAVEGEIDLAKLKKFIAYCRVKCGPRLSAEAAEKLKNRYIIMRSGARQHERDSDRRSSIPITVRQLEAIVRIAEALSKMKLQPFATEADVEEALRLFQVSTLDAALSGTLSGVEGFTSQEDQEMLSRIEKQLKRRFAIGSQVSEHSIIKDFTKQKYPEHAIHKVLQLMLRRGEIQHRMQRKVLYRLK.

At S2 the chain carries N-acetylserine. S315 bears the Phosphoserine mark. Residues 331-537 (VYEVISKSIA…RDVMLAKHVI (207 aa)) form the MCM domain. R371 contributes to the ADP binding site. Residues K392 and K396 each carry the N6-acetyllysine modification. Position 605 is a phosphoserine (S605). K696 carries the N6-acetyllysine modification.

This sequence belongs to the MCM family. As to quaternary structure, component of the MCM2-7 complex. The complex forms a toroidal hexameric ring with the proposed subunit order MCM2-MCM6-MCM4-MCM7-MCM3-MCM5. Component of the CMG helicase complex, a hexameric ring of related MCM2-7 subunits stabilized by CDC45 and the tetrameric GINS complex. Interacts with ANKRD17. Interacts with MCMBP. Interacts with TONSL; the interaction is direct.

The protein resides in the nucleus. The protein localises to the chromosome. The enzyme catalyses ATP + H2O = ADP + phosphate + H(+). Its function is as follows. Acts as a component of the MCM2-7 complex (MCM complex) which is the replicative helicase essential for 'once per cell cycle' DNA replication initiation and elongation in eukaryotic cells. Core component of CDC45-MCM-GINS (CMG) helicase, the molecular machine that unwinds template DNA during replication, and around which the replisome is built. The active ATPase sites in the MCM2-7 ring are formed through the interaction surfaces of two neighboring subunits such that a critical structure of a conserved arginine finger motif is provided in trans relative to the ATP-binding site of the Walker A box of the adjacent subunit. The six ATPase active sites, however, are likely to contribute differentially to the complex helicase activity. The chain is DNA replication licensing factor MCM5 (MCM5) from Homo sapiens (Human).